We begin with the raw amino-acid sequence, 305 residues long: Putative E3 ubiquitin-protein ligase SINAT1 (305 aa).

An RING-type zinc finger spans residues 57–93 (CPVCTNLMYPPIHQCPNGHTLCSSCKLRVQNTCPTCR). The SBD stretch occupies residues 107–300 (VAESLEVPCR…EELKLRVTGR (194 aa)). The segment at 110-170 (SLEVPCRYQN…LVDHLKDDHK (61 aa)) adopts an SIAH-type zinc-finger fold. 8 residues coordinate Zn(2+): C115, C122, H134, C138, C145, C152, H164, and H169.

Belongs to the SINA (Seven in absentia) family. As to quaternary structure, interacts with SINAT6. Interacts with ATG6 and TRAF1A. Interacts with WAV3. Interacts with FREE1. Interacts with ELC/VPS23A.

The protein resides in the endosome. It localises to the multivesicular body. It is found in the cytoplasmic vesicle. The protein localises to the autophagosome. The enzyme catalyses S-ubiquitinyl-[E2 ubiquitin-conjugating enzyme]-L-cysteine + [acceptor protein]-L-lysine = [E2 ubiquitin-conjugating enzyme]-L-cysteine + N(6)-ubiquitinyl-[acceptor protein]-L-lysine.. It participates in protein modification; protein ubiquitination. Its function is as follows. E3 ubiquitin-protein ligase that mediates ubiquitination and subsequent proteasomal degradation of target proteins. E3 ubiquitin ligases accept ubiquitin from an E2 ubiquitin-conjugating enzyme in the form of a thioester and then directly transfers the ubiquitin to targeted substrates. It probably triggers the ubiquitin-mediated degradation of different substrates. Mediates the proteasomal-dependent degradation of ATG6, a component of the autophagosome complex. Requires TRAF1A/MUSE14 and TRAF1B/MUSE13 to target ATG6 for ubiquitination and subsequent regulation of autophagosome assembly. Modulates directly the ubiquitination and proteasomal-dependent degradation of FREE1, a component of the ESCRT-I complex. Modulates directly the ubiquitination and proteasomal-dependent degradation of ELC/VPS23A, a component of the ESCRT-I complex. This chain is Putative E3 ubiquitin-protein ligase SINAT1, found in Arabidopsis thaliana (Mouse-ear cress).